Consider the following 199-residue polypeptide: V-type proton ATPase subunit E (199 aa).

This sequence belongs to the V-ATPase E subunit family.

Produces ATP from ADP in the presence of a proton gradient across the membrane. The sequence is that of V-type proton ATPase subunit E from Clostridium botulinum (strain 657 / Type Ba4).